A 160-amino-acid chain; its full sequence is Ureidoglycolate lyase (160 aa).

Belongs to the ureidoglycolate lyase family. In terms of assembly, homodimer. Ni(2+) serves as cofactor.

It catalyses the reaction (S)-ureidoglycolate = urea + glyoxylate. The protein operates within nitrogen metabolism; (S)-allantoin degradation. Its function is as follows. Catalyzes the catabolism of the allantoin degradation intermediate (S)-ureidoglycolate, generating urea and glyoxylate. Involved in the anaerobic utilization of allantoin as sole nitrogen source. Reinforces the induction of genes involved in the degradation of allantoin and glyoxylate by producing glyoxylate. The sequence is that of Ureidoglycolate lyase from Escherichia coli O127:H6 (strain E2348/69 / EPEC).